We begin with the raw amino-acid sequence, 156 residues long: Endoribonuclease YbeY (156 aa).

Residues His-122, His-126, and His-132 each coordinate Zn(2+).

This sequence belongs to the endoribonuclease YbeY family. The cofactor is Zn(2+).

Its subcellular location is the cytoplasm. Functionally, single strand-specific metallo-endoribonuclease involved in late-stage 70S ribosome quality control and in maturation of the 3' terminus of the 16S rRNA. This Bacillus cytotoxicus (strain DSM 22905 / CIP 110041 / 391-98 / NVH 391-98) protein is Endoribonuclease YbeY.